A 216-amino-acid polypeptide reads, in one-letter code: Probable transaldolase (216 aa).

Lysine 83 (schiff-base intermediate with substrate) is an active-site residue.

This sequence belongs to the transaldolase family. Type 3B subfamily.

The protein resides in the cytoplasm. It carries out the reaction D-sedoheptulose 7-phosphate + D-glyceraldehyde 3-phosphate = D-erythrose 4-phosphate + beta-D-fructose 6-phosphate. The protein operates within carbohydrate degradation; pentose phosphate pathway; D-glyceraldehyde 3-phosphate and beta-D-fructose 6-phosphate from D-ribose 5-phosphate and D-xylulose 5-phosphate (non-oxidative stage): step 2/3. Transaldolase is important for the balance of metabolites in the pentose-phosphate pathway. This is Probable transaldolase from Clostridioides difficile (strain 630) (Peptoclostridium difficile).